Here is a 299-residue protein sequence, read N- to C-terminus: Taste receptor type 2 member 45 (299 aa).

Position 1 (Met-1) is a topological domain, extracellular. A helical transmembrane segment spans residues 2-22 (ITFLPIIFSILVVVTFVIGNF). Residues 23-55 (ANGFIALVNSTEWVKRQKISFADQIVTALAVSR) lie on the Cytoplasmic side of the membrane. A helical transmembrane segment spans residues 56 to 76 (VGLLWVLLLNWYSTVLNPAFC). At 77–98 (SVELRTTAYNIWAVTGHFSNWP) the chain is on the extracellular side. A helical transmembrane segment spans residues 99 to 119 (ATSLSIFYLLKIANFSNLIFL). Residues 120–126 (RLKRRVK) are Cytoplasmic-facing. A helical membrane pass occupies residues 127 to 147 (SVILVVLLGPLLFLACHLFVV). At 148–178 (NMNQIVWTKEYEGNMTWKIKLRRAMYLSDTT) the chain is on the extracellular side. Asn-161 carries an N-linked (GlcNAc...) asparagine glycan. Residues 179-199 (VTMLANLVPFTVTLISFLLLV) traverse the membrane as a helical segment. Topologically, residues 200–229 (CSLCKHLKKMQLHGKGSQDPSTKVHIKVLQ) are cytoplasmic. Residues 230–250 (TVISFFLLRAIYFVSVIISVW) traverse the membrane as a helical segment. Residues 251–259 (SFKNLENKP) are Extracellular-facing. Residues 260 to 280 (VFMFCQAIGFSCSSAHPFILI) form a helical membrane-spanning segment. The Cytoplasmic portion of the chain corresponds to 281–299 (WGNKKLKQTYLSVLWQMRY).

Belongs to the G-protein coupled receptor T2R family. As to expression, expressed in subsets of taste receptor cells of the tongue and exclusively in gustducin-positive cells.

Its subcellular location is the membrane. Receptor that may play a role in the perception of bitterness and is gustducin-linked. May play a role in sensing the chemical composition of the gastrointestinal content. The activity of this receptor may stimulate alpha gustducin, mediate PLC-beta-2 activation and lead to the gating of TRPM5. The protein is Taste receptor type 2 member 45 (TAS2R45) of Homo sapiens (Human).